Consider the following 31-residue polypeptide: GSVFNCGETCVLGTCYTPGCTCNTYRVCTKD.

A cross-link (cyclopeptide (Gly-Asp)) is located at residues 1–31 (GSVFNCGETCVLGTCYTPGCTCNTYRVCTKD). Cystine bridges form between C6–C20, C10–C22, and C15–C28.

It belongs to the cyclotide family. Bracelet subfamily. Post-translationally, this peptide occurs in both cyclic and linear forms.

Probably participates in a plant defense mechanism. In Oldenlandia affinis, this protein is Kalata-B9.